We begin with the raw amino-acid sequence, 158 residues long: Large ribosomal subunit protein bL21 (158 aa).

The disordered stretch occupies residues 127–158 (TQETKSAASVKKAAKKSAPQKQAAVASNSKED). Low complexity predominate over residues 131 to 158 (KSAASVKKAAKKSAPQKQAAVASNSKED).

This sequence belongs to the bacterial ribosomal protein bL21 family. Part of the 50S ribosomal subunit. Contacts protein L20.

In terms of biological role, this protein binds to 23S rRNA in the presence of protein L20. In Bartonella henselae (strain ATCC 49882 / DSM 28221 / CCUG 30454 / Houston 1) (Rochalimaea henselae), this protein is Large ribosomal subunit protein bL21.